Here is a 329-residue protein sequence, read N- to C-terminus: GTPase Obg (329 aa).

The region spanning 1–159 (MQFIDEAKIF…MWVWLHLKLL (159 aa)) is the Obg domain. Residues 160 to 327 (SDVGLVGLPN…LLANILSELQ (168 aa)) form the OBG-type G domain. Residues 166 to 173 (GLPNAGKS), 191 to 195 (FTTLT), 212 to 215 (DIPG), 279 to 282 (TKTD), and 308 to 310 (SSY) each bind GTP. Mg(2+) is bound by residues Ser173 and Thr193.

It belongs to the TRAFAC class OBG-HflX-like GTPase superfamily. OBG GTPase family. Monomer. Mg(2+) serves as cofactor.

The protein localises to the cytoplasm. Its function is as follows. An essential GTPase which binds GTP, GDP and possibly (p)ppGpp with moderate affinity, with high nucleotide exchange rates and a fairly low GTP hydrolysis rate. Plays a role in control of the cell cycle, stress response, ribosome biogenesis and in those bacteria that undergo differentiation, in morphogenesis control. In Orientia tsutsugamushi (strain Ikeda) (Rickettsia tsutsugamushi), this protein is GTPase Obg.